The chain runs to 1171 residues: ATP-dependent helicase/deoxyribonuclease subunit B (1171 aa).

The UvrD-like helicase ATP-binding domain maps to 1-390 (MSLRFVIGRA…HPLVECIRSA (390 aa)). 8–15 (GRAGSGKS) contributes to the ATP binding site. The 307-residue stretch at 281-587 (MEQPRFHSPA…QFANIPPSLD (307 aa)) folds into the UvrD-like helicase C-terminal domain. [4Fe-4S] cluster-binding residues include Cys-805, Cys-1129, Cys-1132, and Cys-1138.

The protein belongs to the helicase family. AddB/RexB type 1 subfamily. Heterodimer of AddA and AddB. Mg(2+) is required as a cofactor. It depends on [4Fe-4S] cluster as a cofactor.

In terms of biological role, the heterodimer acts as both an ATP-dependent DNA helicase and an ATP-dependent, dual-direction single-stranded exonuclease. Recognizes the chi site generating a DNA molecule suitable for the initiation of homologous recombination. The AddB subunit has 5' -&gt; 3' nuclease activity but not helicase activity. The sequence is that of ATP-dependent helicase/deoxyribonuclease subunit B from Bacillus cereus (strain B4264).